The following is a 274-amino-acid chain: 2,3,4,5-tetrahydropyridine-2,6-dicarboxylate N-succinyltransferase (274 aa).

Substrate is bound by residues Arg104 and Asp141.

Belongs to the transferase hexapeptide repeat family. As to quaternary structure, homotrimer.

The protein localises to the cytoplasm. It carries out the reaction (S)-2,3,4,5-tetrahydrodipicolinate + succinyl-CoA + H2O = (S)-2-succinylamino-6-oxoheptanedioate + CoA. It functions in the pathway amino-acid biosynthesis; L-lysine biosynthesis via DAP pathway; LL-2,6-diaminopimelate from (S)-tetrahydrodipicolinate (succinylase route): step 1/3. In Buchnera aphidicola subsp. Baizongia pistaciae (strain Bp), this protein is 2,3,4,5-tetrahydropyridine-2,6-dicarboxylate N-succinyltransferase.